The sequence spans 294 residues: ADP-ribosyl-[dinitrogen reductase] glycohydrolase (294 aa).

ADP-D-ribose contacts are provided by residues 100-102, glutamate 121, histidine 158, and tyrosine 212; that span reads NTC. Residues aspartate 243, aspartate 245, and threonine 246 each coordinate Mn(2+).

It belongs to the ADP-ribosylglycohydrolase family. Monomer. Mn(2+) is required as a cofactor.

The protein localises to the cytoplasm. It carries out the reaction N(omega)-alpha-(ADP-D-ribosyl)-L-arginyl-[dinitrogen reductase] + H2O = L-arginyl-[dinitrogen reductase] + ADP-D-ribose. Involved in the regulation of nitrogen fixation activity by the reversible ADP-ribosylation of one subunit of the homodimeric dinitrogenase reductase component of the nitrogenase enzyme complex. The ADP-ribosyltransferase (DraT) transfers the ADP-ribose group from NAD to dinitrogenase reductase. The ADP-ribose group is removed through the action of the ADP-ribosylglycohydrolase (DraG, this entry). The chain is ADP-ribosyl-[dinitrogen reductase] glycohydrolase from Rhodospirillum rubrum.